We begin with the raw amino-acid sequence, 329 residues long: Probable acyltransferase FabY (329 aa).

The region spanning 18–162 is the N-acetyltransferase domain; it reads YHLRVPQTEE…RHFLMIKPVA (145 aa).

It belongs to the acetyltransferase family. FabY subfamily.

The protein operates within lipid metabolism; fatty acid biosynthesis. Supports initiation of fatty acid biosynthesis in the absence of FabH. The chain is Probable acyltransferase FabY from Escherichia coli O157:H7.